The following is a 261-amino-acid chain: Triosephosphate isomerase (261 aa).

Asn-11 and Lys-13 together coordinate D-glyceraldehyde 3-phosphate. The active-site Electrophile is His-102. The Proton acceptor role is filled by Glu-174. D-glyceraldehyde 3-phosphate contacts are provided by Gly-180, Leu-239, and Gly-241.

The protein belongs to the triosephosphate isomerase family. As to quaternary structure, homodimer.

The enzyme catalyses D-glyceraldehyde 3-phosphate = dihydroxyacetone phosphate. It functions in the pathway carbohydrate biosynthesis; gluconeogenesis. The protein operates within carbohydrate degradation; glycolysis; D-glyceraldehyde 3-phosphate from glycerone phosphate: step 1/1. Catalyzes the interconversion of glyceraldehyde 3-phosphate and dihydroxyacetone phosphate in the glycolytic and gluconeogenic pathways. In Entamoeba histolytica (strain ATCC 30459 / HM-1:IMSS / ABRM), this protein is Triosephosphate isomerase.